Reading from the N-terminus, the 245-residue chain is 1-(5-phosphoribosyl)-5-[(5-phosphoribosylamino)methylideneamino] imidazole-4-carboxamide isomerase (245 aa).

Asp10 (proton acceptor) is an active-site residue. The active-site Proton donor is Asp135.

It belongs to the HisA/HisF family.

It is found in the cytoplasm. The enzyme catalyses 1-(5-phospho-beta-D-ribosyl)-5-[(5-phospho-beta-D-ribosylamino)methylideneamino]imidazole-4-carboxamide = 5-[(5-phospho-1-deoxy-D-ribulos-1-ylimino)methylamino]-1-(5-phospho-beta-D-ribosyl)imidazole-4-carboxamide. The protein operates within amino-acid biosynthesis; L-histidine biosynthesis; L-histidine from 5-phospho-alpha-D-ribose 1-diphosphate: step 4/9. The chain is 1-(5-phosphoribosyl)-5-[(5-phosphoribosylamino)methylideneamino] imidazole-4-carboxamide isomerase from Methanosarcina acetivorans (strain ATCC 35395 / DSM 2834 / JCM 12185 / C2A).